The sequence spans 303 residues: Hemolysin E, chromosomal (303 aa).

A disulfide bond links cysteine 87 and cysteine 285. Residues 183–203 (AGVVAGPFGLIISYSIAAGVV) traverse the membrane as a helical segment.

Monomer and oligomer. In periplasm, it is present as a monomer, while in outer membrane vesicles, it oligomerizes to form a pore structure that is active. The pore is formed by a dodecamer. In terms of processing, in periplasm, it forms a disulfide bond between Cys-87 and Cys-285, which prevents the oligomerization. In outer membrane vesicles, the redox status prevents formation of the disulfide bond, leading to oligomerization and pore formation.

Its subcellular location is the secreted. The protein localises to the periplasm. The protein resides in the host cell membrane. Toxin, which has some hemolytic activity towards mammalian cells. Acts by forming a pore-like structure upon contact with mammalian cells. This is Hemolysin E, chromosomal (hlyE) from Escherichia coli (strain K12).